The primary structure comprises 275 residues: NH(3)-dependent NAD(+) synthetase (275 aa).

46-53 (GISGGQDS) provides a ligand contact to ATP. Aspartate 52 is a binding site for Mg(2+). Arginine 140 contacts deamido-NAD(+). Threonine 160 lines the ATP pocket. Glutamate 165 is a binding site for Mg(2+). 2 residues coordinate deamido-NAD(+): lysine 173 and aspartate 180. The ATP site is built by lysine 189 and threonine 211. Residue 260–261 (HK) coordinates deamido-NAD(+).

Belongs to the NAD synthetase family. As to quaternary structure, homodimer.

It carries out the reaction deamido-NAD(+) + NH4(+) + ATP = AMP + diphosphate + NAD(+) + H(+). It functions in the pathway cofactor biosynthesis; NAD(+) biosynthesis; NAD(+) from deamido-NAD(+) (ammonia route): step 1/1. In terms of biological role, catalyzes the ATP-dependent amidation of deamido-NAD to form NAD. Uses ammonia as a nitrogen source. This Salmonella choleraesuis (strain SC-B67) protein is NH(3)-dependent NAD(+) synthetase.